The primary structure comprises 1794 residues: Protein TIC 214 (1794 aa).

Helical transmembrane passes span 19 to 39 (IINSVVVVGLYYGFLTTFSIG), 68 to 88 (FIAGQLMMFISIYYAPLHLAL), 91 to 111 (PHTITVLALPYLLFHFFWNNH), 133 to 153 (VFLNNLIFQLFNHFILPSSML), 176 to 196 (VGWLIGHILFMKWVGLVLVWI), and 227 to 247 (IFSILLFITCVYYLGRIPSPI).

This sequence belongs to the TIC214 family. Part of the Tic complex.

Its subcellular location is the plastid. It localises to the chloroplast inner membrane. Involved in protein precursor import into chloroplasts. May be part of an intermediate translocation complex acting as a protein-conducting channel at the inner envelope. This Olimarabidopsis pumila (Dwarf rocket) protein is Protein TIC 214.